A 124-amino-acid chain; its full sequence is Small ribosomal subunit protein uS10 (124 aa).

The protein belongs to the universal ribosomal protein uS10 family.

The chain is Small ribosomal subunit protein uS10 (rps20) from Dictyostelium discoideum (Social amoeba).